A 114-amino-acid polypeptide reads, in one-letter code: Large ribosomal subunit protein bL21 (114 aa).

The protein belongs to the bacterial ribosomal protein bL21 family. Part of the 50S ribosomal subunit. Contacts protein L20.

Its function is as follows. This protein binds to 23S rRNA in the presence of protein L20. This chain is Large ribosomal subunit protein bL21, found in Protochlamydia amoebophila (strain UWE25).